The primary structure comprises 3165 residues: ORFB polyprotein (3165 aa).

One can recognise a Peptidase C8 domain in the interval Met-271–Gly-418. Catalysis depends on for papain-like protease p48 activity residues Cys-341 and His-388. Residues Ala-453–Glu-472 are disordered. 6 helical membrane-spanning segments follow: residues Ile-791–Tyr-811, Tyr-823–Cys-843, Ala-1166–Met-1186, Lys-1193–Trp-1213, Phe-1215–Tyr-1235, and Ala-1356–Pro-1376. The segment at Phe-1793–Trp-2208 is RNA-directed RNA polymerase. Helical transmembrane passes span Val-2495–Val-2515, Leu-2517–Trp-2537, and Leu-2590–Phe-2610. The Helicase ATP-binding domain occupies Ala-2651–Lys-2796. An ATP-binding site is contributed by Ala-2664–Ser-2671. The DEFH box signature appears at Asp-2751–His-2754.

In the C-terminal section; belongs to the DEAD box helicase family. Papain-like protease p48 is autocatalytically processed. The putative RNA-directed RNA polymerase/helicase may be further processed.

Its subcellular location is the host membrane. It carries out the reaction RNA(n) + a ribonucleoside 5'-triphosphate = RNA(n+1) + diphosphate. The catalysed reaction is ATP + H2O = ADP + phosphate + H(+). Functionally, papain-like protease p48 is a cysteine protease of the peptidase family C8. This chain is ORFB polyprotein, found in Cryphonectria hypovirus 1 (strain EP713) (CHV-1/EP713).